A 365-amino-acid polypeptide reads, in one-letter code: Peptide chain release factor 2 (365 aa).

Gln252 carries the post-translational modification N5-methylglutamine.

Belongs to the prokaryotic/mitochondrial release factor family. Methylated by PrmC. Methylation increases the termination efficiency of RF2.

The protein resides in the cytoplasm. Its function is as follows. Peptide chain release factor 2 directs the termination of translation in response to the peptide chain termination codons UGA and UAA. The chain is Peptide chain release factor 2 from Colwellia psychrerythraea (strain 34H / ATCC BAA-681) (Vibrio psychroerythus).